The chain runs to 701 residues: Polyribonucleotide nucleotidyltransferase (701 aa).

Residues Asp485 and Asp491 each contribute to the Mg(2+) site. Residues 552–611 (PKIFKTTVDPEKIRDIIGPGGKMINKIIAKTNVKIDIEPDGRIFVAAPDDISGNRAISMI) form the KH domain. Residues 621–689 (GQFFLGKVTR…RLGRIALSRK (69 aa)) form the S1 motif domain.

It belongs to the polyribonucleotide nucleotidyltransferase family. The cofactor is Mg(2+).

It localises to the cytoplasm. It carries out the reaction RNA(n+1) + phosphate = RNA(n) + a ribonucleoside 5'-diphosphate. In terms of biological role, involved in mRNA degradation. Catalyzes the phosphorolysis of single-stranded polyribonucleotides processively in the 3'- to 5'-direction. This is Polyribonucleotide nucleotidyltransferase from Caldicellulosiruptor saccharolyticus (strain ATCC 43494 / DSM 8903 / Tp8T 6331).